A 275-amino-acid chain; its full sequence is Large ribosomal subunit protein uL2 (275 aa).

The interval 223–260 (VAMNPVDHPHGGGEGRTSGGRHPVSPWGLPTKGYKTRS) is disordered.

Belongs to the universal ribosomal protein uL2 family. As to quaternary structure, part of the 50S ribosomal subunit. Forms a bridge to the 30S subunit in the 70S ribosome.

In terms of biological role, one of the primary rRNA binding proteins. Required for association of the 30S and 50S subunits to form the 70S ribosome, for tRNA binding and peptide bond formation. It has been suggested to have peptidyltransferase activity; this is somewhat controversial. Makes several contacts with the 16S rRNA in the 70S ribosome. The sequence is that of Large ribosomal subunit protein uL2 from Legionella pneumophila (strain Paris).